The sequence spans 143 residues: Large ribosomal subunit protein uL15 (143 aa).

The tract at residues 1–52 is disordered; that stretch reads MKLNTLAPAAGSKSAPKRLGRGIGSGLGKTSGKGHKGQKARSGGYHKVGFEG. Gly residues predominate over residues 21 to 31; sequence RGIGSGLGKTS.

The protein belongs to the universal ribosomal protein uL15 family. Part of the 50S ribosomal subunit.

Its function is as follows. Binds to the 23S rRNA. This is Large ribosomal subunit protein uL15 from Francisella tularensis subsp. holarctica (strain FTNF002-00 / FTA).